We begin with the raw amino-acid sequence, 206 residues long: Ribosomal RNA large subunit methyltransferase E (206 aa).

S-adenosyl-L-methionine-binding residues include G61, W63, D81, D97, and D122. K162 acts as the Proton acceptor in catalysis.

The protein belongs to the class I-like SAM-binding methyltransferase superfamily. RNA methyltransferase RlmE family.

The protein resides in the cytoplasm. It carries out the reaction uridine(2552) in 23S rRNA + S-adenosyl-L-methionine = 2'-O-methyluridine(2552) in 23S rRNA + S-adenosyl-L-homocysteine + H(+). Functionally, specifically methylates the uridine in position 2552 of 23S rRNA at the 2'-O position of the ribose in the fully assembled 50S ribosomal subunit. In Neisseria meningitidis serogroup C (strain 053442), this protein is Ribosomal RNA large subunit methyltransferase E.